Reading from the N-terminus, the 141-residue chain is Small ribosomal subunit protein uS12 (141 aa).

Residues 1 to 11 show a composition bias toward polar residues; the sequence is MPTISQLVTTS. The disordered stretch occupies residues 1–22; sequence MPTISQLVTTSRQDKNYKSKSP. Asp102 is modified (3-methylthioaspartic acid).

Belongs to the universal ribosomal protein uS12 family. Part of the 30S ribosomal subunit. Contacts proteins S8 and S17. May interact with IF1 in the 30S initiation complex.

Its function is as follows. With S4 and S5 plays an important role in translational accuracy. Interacts with and stabilizes bases of the 16S rRNA that are involved in tRNA selection in the A site and with the mRNA backbone. Located at the interface of the 30S and 50S subunits, it traverses the body of the 30S subunit contacting proteins on the other side and probably holding the rRNA structure together. The combined cluster of proteins S8, S12 and S17 appears to hold together the shoulder and platform of the 30S subunit. The protein is Small ribosomal subunit protein uS12 of Acholeplasma laidlawii (strain PG-8A).